We begin with the raw amino-acid sequence, 669 residues long: Major S-layer protein (669 aa).

An N-terminal signal peptide occupies residues 1-24 (MKRFAAVSLAALMLLTVFASAASA). 5 N-linked (GlcNAc...) asparagine glycosylation sites follow: asparagine 36, asparagine 70, asparagine 116, asparagine 600, and asparagine 607. The segment at 588–648 (DGEVVDDDED…PTEADGTTPG (61 aa)) is disordered. Residues 590-627 (EVVDDDEDDDNVTEPVDNDTEVEEPTEEPTEGPTEEPT) show a composition bias toward acidic residues. Residues 645 to 665 (TTPGFGVVLGLVGLLAVVYLV) traverse the membrane as a helical segment.

The protein belongs to the Methanosarcinales S-layer protein family. In terms of processing, glycosylated.

It localises to the secreted. It is found in the cell wall. The protein localises to the S-layer. The protein resides in the cell membrane. Functionally, S-layer protein. The S-layer is a paracrystalline mono-layered assembly of proteins which coat the surface of the cell. The sequence is that of Major S-layer protein from Methanosarcina mazei (strain ATCC BAA-159 / DSM 3647 / Goe1 / Go1 / JCM 11833 / OCM 88) (Methanosarcina frisia).